Reading from the N-terminus, the 43-residue chain is Oxygen-evolving enhancer protein 2 (43 aa).

It belongs to the PsbP family.

The protein resides in the plastid. Its subcellular location is the chloroplast thylakoid membrane. In terms of biological role, may be involved in the regulation of photosystem II. The sequence is that of Oxygen-evolving enhancer protein 2 from Physcomitrium patens (Spreading-leaved earth moss).